The chain runs to 227 residues: Adenosylcobinamide-GDP ribazoletransferase (227 aa).

5 helical membrane passes run 3–23 (CLKAVVAFFTALPVGGAELDF), 26–46 (IWATPYLAGLMVGGAGGAVYF), 95–115 (GVGGIFAVVALFVLAASARPE), 117–137 (WLDYIVTDLYSKALALVVAAY), and 165–185 (AVAAWLHPAAFLAATVLSLFF).

The protein belongs to the CobS family. Mg(2+) is required as a cofactor.

Its subcellular location is the cell membrane. The catalysed reaction is alpha-ribazole + adenosylcob(III)inamide-GDP = adenosylcob(III)alamin + GMP + H(+). It catalyses the reaction alpha-ribazole 5'-phosphate + adenosylcob(III)inamide-GDP = adenosylcob(III)alamin 5'-phosphate + GMP + H(+). The protein operates within cofactor biosynthesis; adenosylcobalamin biosynthesis; adenosylcobalamin from cob(II)yrinate a,c-diamide: step 7/7. Joins adenosylcobinamide-GDP and alpha-ribazole to generate adenosylcobalamin (Ado-cobalamin). Also synthesizes adenosylcobalamin 5'-phosphate from adenosylcobinamide-GDP and alpha-ribazole 5'-phosphate. In Pyrobaculum islandicum (strain DSM 4184 / JCM 9189 / GEO3), this protein is Adenosylcobinamide-GDP ribazoletransferase.